The chain runs to 644 residues: MIPAHWLYCLMLLLPIESCRILCQASSKSKEKVTSRPHDVCDGVCNNNGTPCFQSCPPDSEGNMKFACKAKKWHKVTETCHTLNTHSIFEEDKELYSVQSSDSTIRTHMFHRELKTIMDTLMEKCPKDLSCVIKGIERSPRMPGNIAVVVQLLHNISTTLTKDVNEEKMQSYSAMANHILNSKSISNWTFIQDRNSSCVLLQSIHSFASKLFMKEHLINISHVFIHTLGTVVSRGSLGKNFTFSMRINETSDKVTGRLLLSPEELQKVPSAFQVISIAFPTLGAILEASLLENVTVNGLVLSVILPEELKNISLIFEKIRKSGERKSQCVGWHSLESRWDWRACKTIQENSRQAVCRCRPNKLYTSFSILMSPNTLESPVLTYITYIGLGISICSLIICLAIEVLVWSQVTKTEISYLRHLCIANIAATLLMADAWFIVASFLSGPVLHHNGCVAATFFVHFFYLSVFFWMLAKALLILYGILIVFHTLPKSCLVASLFSVGYGCPLVIAIITLAVTEPGKGYLRPEACWLNWDMTKALLAFVVPALAIVVVNLITVTMVIIKTQRAAIGSSMFQEVRAIVRICKNIAILTPLLGLTWGFGIATVINGHSLAFHIIFSLLNALQVSPDAAVDSELRECVHRFCG.

Residues 1–18 (MIPAHWLYCLMLLLPIES) form the signal peptide. The Extracellular segment spans residues 19 to 386 (CRILCQASSK…ESPVLTYITY (368 aa)). N155, N219, N293, and N311 each carry an N-linked (GlcNAc...) asparagine glycan. In terms of domain architecture, GAIN-B spans 233 to 377 (SRGSLGKNFT…SILMSPNTLE (145 aa)). 2 disulfide bridges follow: C329–C356 and C344–C358. The GPS stretch occupies residues 329–377 (CVGWHSLESRWDWRACKTIQENSRQAVCRCRPNKLYTSFSILMSPNTLE). A helical membrane pass occupies residues 387 to 407 (IGLGISICSLIICLAIEVLVW). The Cytoplasmic segment spans residues 408 to 422 (SQVTKTEISYLRHLC). The helical transmembrane segment at 423 to 443 (IANIAATLLMADAWFIVASFL) threads the bilayer. Over 444-465 (SGPVLHHNGCVAATFFVHFFYL) the chain is Extracellular. The helical transmembrane segment at 466–486 (SVFFWMLAKALLILYGILIVF) threads the bilayer. At 487-493 (HTLPKSC) the chain is on the cytoplasmic side. The helical transmembrane segment at 494–514 (LVASLFSVGYGCPLVIAIITL) threads the bilayer. The Extracellular segment spans residues 515 to 541 (AVTEPGKGYLRPEACWLNWDMTKALLA). Residues 542 to 562 (FVVPALAIVVVNLITVTMVII) traverse the membrane as a helical segment. Residues 563–585 (KTQRAAIGSSMFQEVRAIVRICK) are Cytoplasmic-facing. Residues 586–606 (NIAILTPLLGLTWGFGIATVI) traverse the membrane as a helical segment. Topologically, residues 607–610 (NGHS) are extracellular. The helical transmembrane segment at 611 to 631 (LAFHIIFSLLNALQVSPDAAV) threads the bilayer.

Belongs to the G-protein coupled receptor 2 family. Adhesion G-protein coupled receptor (ADGR) subfamily. As to expression, mainly expressed in skin and heart, and very weakly in lung and spleen. Detected in all epidermal layers of skin.

It localises to the membrane. Its function is as follows. Orphan receptor. The protein is Adhesion G-protein coupled receptor F2 (Adgrf2) of Mus musculus (Mouse).